The sequence spans 275 residues: Large ribosomal subunit protein uL2 (275 aa).

Disordered regions lie at residues 28 to 49 and 224 to 246; these read APHAALVESQSRSGGRNHHGRI and AMNPVDHPHGGGEAKAGQGNPHP.

It belongs to the universal ribosomal protein uL2 family. In terms of assembly, part of the 50S ribosomal subunit. Forms a bridge to the 30S subunit in the 70S ribosome.

Its function is as follows. One of the primary rRNA binding proteins. Required for association of the 30S and 50S subunits to form the 70S ribosome, for tRNA binding and peptide bond formation. It has been suggested to have peptidyltransferase activity; this is somewhat controversial. Makes several contacts with the 16S rRNA in the 70S ribosome. The chain is Large ribosomal subunit protein uL2 from Stenotrophomonas maltophilia (strain R551-3).